Here is a 72-residue protein sequence, read N- to C-terminus: Protein RALF-like 36 (72 aa).

A signal peptide spans Met1–Ala27. 2 disulfide bridges follow: Cys43-Cys51 and Cys63-Cys69.

It belongs to the plant rapid alkalinization factor (RALF) family.

It localises to the secreted. Its function is as follows. Cell signaling peptide that may regulate plant stress, growth, and development. Mediates a rapid alkalinization of extracellular space by mediating a transient increase in the cytoplasmic Ca(2+) concentration leading to a calcium-dependent signaling events through a cell surface receptor and a concomitant activation of some intracellular mitogen-activated protein kinases. The polypeptide is Protein RALF-like 36 (Arabidopsis thaliana (Mouse-ear cress)).